The chain runs to 69 residues: DNA-directed RNA polymerase subunit epsilon (69 aa).

It belongs to the RNA polymerase subunit epsilon family. RNAP is composed of a core of 2 alpha, a beta and a beta' subunit. The core is associated with a delta subunit, and at least one of epsilon or omega. When a sigma factor is associated with the core the holoenzyme is formed, which can initiate transcription.

The catalysed reaction is RNA(n) + a ribonucleoside 5'-triphosphate = RNA(n+1) + diphosphate. Functionally, a non-essential component of RNA polymerase (RNAP). This Geobacillus sp. (strain WCH70) protein is DNA-directed RNA polymerase subunit epsilon.